The chain runs to 207 residues: Large ribosomal subunit protein bL25 (207 aa).

The interval 185 to 207 is disordered; it reads DLEEETGEAAAEAEAPAEEGAES.

The protein belongs to the bacterial ribosomal protein bL25 family. CTC subfamily. Part of the 50S ribosomal subunit; part of the 5S rRNA/L5/L18/L25 subcomplex. Contacts the 5S rRNA. Binds to the 5S rRNA independently of L5 and L18.

Its function is as follows. This is one of the proteins that binds to the 5S RNA in the ribosome where it forms part of the central protuberance. The polypeptide is Large ribosomal subunit protein bL25 (Rhodococcus jostii (strain RHA1)).